Reading from the N-terminus, the 438-residue chain is 23S rRNA (uracil(1939)-C(5))-methyltransferase RlmD (438 aa).

In terms of domain architecture, TRAM spans 11–69 (LQPESKHQQVLVEKLDHQGAGIAYLNKKPLFIDGTLPGEEVVTQLTESKSKFARGKLIK). Residues Cys-82, Cys-88, Cys-91, and Cys-169 each contribute to the [4Fe-4S] cluster site. S-adenosyl-L-methionine-binding residues include Gln-272, Phe-301, Asn-306, Glu-322, Asn-349, and Asp-370. Catalysis depends on Cys-396, which acts as the Nucleophile.

It belongs to the class I-like SAM-binding methyltransferase superfamily. RNA M5U methyltransferase family. RlmD subfamily.

The enzyme catalyses uridine(1939) in 23S rRNA + S-adenosyl-L-methionine = 5-methyluridine(1939) in 23S rRNA + S-adenosyl-L-homocysteine + H(+). Catalyzes the formation of 5-methyl-uridine at position 1939 (m5U1939) in 23S rRNA. The chain is 23S rRNA (uracil(1939)-C(5))-methyltransferase RlmD from Vibrio vulnificus (strain CMCP6).